The chain runs to 332 residues: Phospho-N-acetylmuramoyl-pentapeptide-transferase (332 aa).

Helical transmembrane passes span 9–29 (IYTI…IIPF), 55–75 (TIGG…AGLI), 79–99 (LWVA…DDFI), 115–135 (MSLQ…ISVM), 155–175 (IPQY…VVVA), 196–216 (IVAA…LAIF), 253–273 (AVAI…IYFA), and 312–332 (VVIV…LGLN).

Belongs to the glycosyltransferase 4 family. MraY subfamily. The cofactor is Mg(2+).

It localises to the cell membrane. It carries out the reaction UDP-N-acetyl-alpha-D-muramoyl-L-alanyl-gamma-D-glutamyl-meso-2,6-diaminopimeloyl-D-alanyl-D-alanine + di-trans,octa-cis-undecaprenyl phosphate = di-trans,octa-cis-undecaprenyl diphospho-N-acetyl-alpha-D-muramoyl-L-alanyl-D-glutamyl-meso-2,6-diaminopimeloyl-D-alanyl-D-alanine + UMP. The protein operates within cell wall biogenesis; peptidoglycan biosynthesis. Its function is as follows. Catalyzes the initial step of the lipid cycle reactions in the biosynthesis of the cell wall peptidoglycan: transfers peptidoglycan precursor phospho-MurNAc-pentapeptide from UDP-MurNAc-pentapeptide onto the lipid carrier undecaprenyl phosphate, yielding undecaprenyl-pyrophosphoryl-MurNAc-pentapeptide, known as lipid I. This Alkaliphilus oremlandii (strain OhILAs) (Clostridium oremlandii (strain OhILAs)) protein is Phospho-N-acetylmuramoyl-pentapeptide-transferase.